Here is a 148-residue protein sequence, read N- to C-terminus: Natriuretic peptide BF131 (148 aa).

The signal sequence occupies residues 1–27; it reads MVGPSRLAGGGLLLLLLLALLPLALDG. Residues 28–83 constitute a propeptide that is removed on maturation; sequence KPAPPPQALPKDPAAASAAERIMRALLPDSKSSRPATDRMVHPEHQAGGGDTRRLQ. Disordered regions lie at residues 54 to 83 and 105 to 127; these read LPDS…RRLQ and TSDM…PSAA. The span at 63-83 shows a compositional bias: basic and acidic residues; sequence ATDRMVHPEHQAGGGDTRRLQ. The cysteines at positions 94 and 110 are disulfide-linked. Residues 130 to 148 constitute a propeptide that is removed on maturation; it reads AVTWLIRDLRADSKQSRAA.

Belongs to the natriuretic peptide family. Expressed by the venom gland.

The protein localises to the secreted. Natriuretic peptide that dose-dependently induces the rapid relaxation of rat aortic strips phenylephrine-precontracted. Acts by stimulating cGMP production in a dose-dependent manner (by probably activating NPR1 and/or NPR2). May also show potent hypotensive effects. This is Natriuretic peptide BF131 from Bungarus flaviceps flaviceps (Red-headed krait).